We begin with the raw amino-acid sequence, 860 residues long: Leucine--tRNA ligase (860 aa).

The 'HIGH' region motif lies at 42–52 (PYPSGRLHMGH). The 'KMSKS' region signature appears at 619 to 623 (KMSKS). Residue K622 participates in ATP binding.

The protein belongs to the class-I aminoacyl-tRNA synthetase family.

It is found in the cytoplasm. It carries out the reaction tRNA(Leu) + L-leucine + ATP = L-leucyl-tRNA(Leu) + AMP + diphosphate. The polypeptide is Leucine--tRNA ligase (Salmonella enteritidis PT4 (strain P125109)).